We begin with the raw amino-acid sequence, 126 residues long: Histone H2B type 3-B (126 aa).

Low complexity predominate over residues 1–12; that stretch reads MPDPSKSAPAPK. The disordered stretch occupies residues 1–35; the sequence is MPDPSKSAPAPKKGSKKAVTKAQKKDGKKRKRGRK. Pro2 bears the N-acetylproline mark. The residue at position 6 (Lys6) is an N6-(2-hydroxyisobutyryl)lysine; alternate. An N6-(beta-hydroxybutyryl)lysine; alternate modification is found at Lys6. Lys6 bears the N6-acetyllysine; alternate mark. Lys6 carries the post-translational modification N6-butyryllysine; alternate. An N6-crotonyllysine; alternate modification is found at Lys6. Lys6 is subject to N6-lactoyllysine; alternate. A Glycyl lysine isopeptide (Lys-Gly) (interchain with G-Cter in SUMO2); alternate cross-link involves residue Lys6. Position 7 is an ADP-ribosylserine (Ser7). Lys12 carries the post-translational modification N6-(beta-hydroxybutyryl)lysine; alternate. Residues Lys12 and Lys13 each carry the N6-acetyllysine; alternate modification. Residues Lys12 and Lys13 each carry the N6-crotonyllysine; alternate modification. An N6-lactoyllysine; alternate modification is found at Lys12. Lys13 bears the N6-(2-hydroxyisobutyryl)lysine; alternate mark. Position 15 is a phosphoserine; by STK4/MST1 (Ser15). An N6-acetyllysine; alternate mark is found at Lys16, Lys17, Lys21, and Lys24. An N6-crotonyllysine; alternate mark is found at Lys16, Lys17, Lys21, and Lys24. 4 positions are modified to N6-lactoyllysine; alternate: Lys16, Lys17, Lys21, and Lys24. N6-(beta-hydroxybutyryl)lysine; alternate is present on residues Lys17 and Lys21. An N6-glutaryllysine; alternate modification is found at Lys17. Residues Lys21 and Lys24 each carry the N6-(2-hydroxyisobutyryl)lysine; alternate modification. Lys21 is modified (N6-butyryllysine; alternate). A Glycyl lysine isopeptide (Lys-Gly) (interchain with G-Cter in SUMO2); alternate cross-link involves residue Lys21. N6-(2-hydroxyisobutyryl)lysine is present on Lys25. At Lys35 the chain carries N6-(2-hydroxyisobutyryl)lysine; alternate. Lys35 bears the N6-(beta-hydroxybutyryl)lysine; alternate mark. N6-crotonyllysine; alternate is present on Lys35. Position 35 is an N6-glutaryllysine; alternate (Lys35). Position 35 is an N6-succinyllysine; alternate (Lys35). A Glycyl lysine isopeptide (Lys-Gly) (interchain with G-Cter in ubiquitin); alternate cross-link involves residue Lys35. A PolyADP-ribosyl glutamic acid modification is found at Glu36. Ser37 bears the Phosphoserine; by AMPK mark. Residues Lys44, Lys47, and Lys58 each carry the N6-(2-hydroxyisobutyryl)lysine; alternate modification. The residue at position 44 (Lys44) is an N6-lactoyllysine; alternate. N6-glutaryllysine; alternate is present on residues Lys44 and Lys47. Position 47 is an N6-methyllysine; alternate (Lys47). Lys58 carries the N6,N6-dimethyllysine; alternate modification. A Dimethylated arginine modification is found at Arg80. Position 86 is an N6-(2-hydroxyisobutyryl)lysine; alternate (Lys86). The residue at position 86 (Lys86) is an N6-(beta-hydroxybutyryl)lysine; alternate. Lys86 bears the N6-acetyllysine; alternate mark. The residue at position 86 (Lys86) is an N6-lactoyllysine; alternate. N6,N6,N6-trimethyllysine; alternate is present on Lys86. Omega-N-methylarginine occurs at positions 87 and 93. The residue at position 109 (Lys109) is an N6-(2-hydroxyisobutyryl)lysine; alternate. Lys109 is modified (N6-lactoyllysine; alternate). An N6-glutaryllysine; alternate modification is found at Lys109. Lys109 is subject to N6-methyllysine; alternate. O-linked (GlcNAc) serine glycosylation occurs at Ser113. Position 116 is a phosphothreonine (Thr116). Residues Lys117 and Lys121 each carry the N6-(2-hydroxyisobutyryl)lysine; alternate modification. An N6-(beta-hydroxybutyryl)lysine; alternate mark is found at Lys117 and Lys121. N6-lactoyllysine; alternate occurs at positions 117 and 121. N6-glutaryllysine; alternate occurs at positions 117 and 121. N6-succinyllysine; alternate is present on residues Lys117 and Lys121. N6-malonyllysine; alternate is present on Lys117. Lys117 carries the N6-methylated lysine; alternate modification. Lys121 is covalently cross-linked (Glycyl lysine isopeptide (Lys-Gly) (interchain with G-Cter in ubiquitin); alternate).

This sequence belongs to the histone H2B family. In terms of assembly, the nucleosome is a histone octamer containing two molecules each of H2A, H2B, H3 and H4 assembled in one H3-H4 heterotetramer and two H2A-H2B heterodimers. The octamer wraps approximately 147 bp of DNA. In terms of processing, monoubiquitination at Lys-35 (H2BK34Ub) by the MSL1/MSL2 dimer is required for histone H3 'Lys-4' (H3K4me) and 'Lys-79' (H3K79me) methylation and transcription activation at specific gene loci, such as HOXA9 and MEIS1 loci. Similarly, monoubiquitination at Lys-121 (H2BK120Ub) by the RNF20/40 complex gives a specific tag for epigenetic transcriptional activation and is also prerequisite for histone H3 'Lys-4' and 'Lys-79' methylation. It also functions cooperatively with the FACT dimer to stimulate elongation by RNA polymerase II. H2BK120Ub also acts as a regulator of mRNA splicing: deubiquitination by USP49 is required for efficient cotranscriptional splicing of a large set of exons. Post-translationally, phosphorylation at Ser-37 (H2BS36ph) by AMPK in response to stress promotes transcription. Phosphorylated on Ser-15 (H2BS14ph) by STK4/MST1 during apoptosis; which facilitates apoptotic chromatin condensation. Also phosphorylated on Ser-15 in response to DNA double strand breaks (DSBs), and in correlation with somatic hypermutation and immunoglobulin class-switch recombination. GlcNAcylation at Ser-113 promotes monoubiquitination of Lys-121. It fluctuates in response to extracellular glucose, and associates with transcribed genes. In terms of processing, ADP-ribosylated by PARP1 or PARP2 on Ser-7 (H2BS6ADPr) in response to DNA damage. H2BS6ADPr promotes recruitment of CHD1L. Poly ADP-ribosylation on Glu-36 (H2BE35ADPr) by PARP1 regulates adipogenesis: it inhibits phosphorylation at Ser-37 (H2BS36ph), thereby blocking expression of pro-adipogenetic genes. Post-translationally, crotonylation (Kcr) is specifically present in male germ cells and marks testis-specific genes in post-meiotic cells, including X-linked genes that escape sex chromosome inactivation in haploid cells. Crotonylation marks active promoters and enhancers and confers resistance to transcriptional repressors. It is also associated with post-meiotically activated genes on autosomes. Lactylated in macrophages by EP300/P300 by using lactoyl-CoA directly derived from endogenous or exogenous lactate, leading to stimulates gene transcription.

It localises to the nucleus. It is found in the chromosome. In terms of biological role, core component of nucleosome. Nucleosomes wrap and compact DNA into chromatin, limiting DNA accessibility to the cellular machineries which require DNA as a template. Histones thereby play a central role in transcription regulation, DNA repair, DNA replication and chromosomal stability. DNA accessibility is regulated via a complex set of post-translational modifications of histones, also called histone code, and nucleosome remodeling. The protein is Histone H2B type 3-B of Homo sapiens (Human).